A 65-amino-acid polypeptide reads, in one-letter code: Large ribosomal subunit protein bL31 (65 aa).

Zn(2+) contacts are provided by C16, C18, C36, and C39.

It belongs to the bacterial ribosomal protein bL31 family. Type A subfamily. As to quaternary structure, part of the 50S ribosomal subunit. Zn(2+) is required as a cofactor.

Its function is as follows. Binds the 23S rRNA. This Brevibacillus brevis (strain 47 / JCM 6285 / NBRC 100599) protein is Large ribosomal subunit protein bL31.